Reading from the N-terminus, the 362-residue chain is Large ribosomal subunit protein uL2m (362 aa).

The transit peptide at 1 to 23 (MLSYNRFRGYLIPQIHALKLFRY) directs the protein to the mitochondrion. The disordered stretch occupies residues 306-362 (AMNPCDHPHGGGGGKSIGNKPSQSPWGVLAKGGYKTRRGKNVNKLLVRDRPRGKEKR). Residues 351 to 362 (LVRDRPRGKEKR) are compositionally biased toward basic and acidic residues.

The protein belongs to the universal ribosomal protein uL2 family. In terms of assembly, component of the mitochondrial large ribosomal subunit (mt-LSU). Mature yeast 74S mitochondrial ribosomes consist of a small (37S) and a large (54S) subunit. The 37S small subunit contains a 15S ribosomal RNA (15S mt-rRNA) and at least 32 different proteins. The 54S large subunit contains a 21S rRNA (21S mt-rRNA) and at least 45 different proteins. uL2m has a Na/K ligand binding site.

Its subcellular location is the mitochondrion. Component of the mitochondrial ribosome (mitoribosome), a dedicated translation machinery responsible for the synthesis of mitochondrial genome-encoded proteins, including at least some of the essential transmembrane subunits of the mitochondrial respiratory chain. The mitoribosomes are attached to the mitochondrial inner membrane and translation products are cotranslationally integrated into the membrane. In Schizosaccharomyces pombe (strain 972 / ATCC 24843) (Fission yeast), this protein is Large ribosomal subunit protein uL2m (rml2).